A 434-amino-acid chain; its full sequence is ATP phosphoribosyltransferase regulatory subunit (434 aa).

The segment at 1–48 (MYGRGSGAEHSRGSGAEHFWDPRPEASSTVSSSLRPPSGARDLLPREV) is disordered. Over residues 27–38 (SSTVSSSLRPPS) the composition is skewed to low complexity.

It belongs to the class-II aminoacyl-tRNA synthetase family. HisZ subfamily. As to quaternary structure, heteromultimer composed of HisG and HisZ subunits.

The protein localises to the cytoplasm. It functions in the pathway amino-acid biosynthesis; L-histidine biosynthesis; L-histidine from 5-phospho-alpha-D-ribose 1-diphosphate: step 1/9. Functionally, required for the first step of histidine biosynthesis. May allow the feedback regulation of ATP phosphoribosyltransferase activity by histidine. The sequence is that of ATP phosphoribosyltransferase regulatory subunit from Synechococcus sp. (strain JA-2-3B'a(2-13)) (Cyanobacteria bacterium Yellowstone B-Prime).